The following is a 239-amino-acid chain: MTNEDFIEALSSAGITLTTQQVRQFERYYELLVATNEHVNLTAITEKKDVYLKHFYDSLTVAMYEQKLKSSESTLIDIGTGAGFPSLPLKIAFPDLKITMVDALKKRVNFLQEVVDTLDLTGVEIVHGRAEDIGQNPKYRENFDYATARAVARTSVLAEYTLPFVKIGGRFLVMKGSAAHQELLDGQKALAMLGGQVNEEFVFTLPNGDQRYIQIVDKKTKTPKKYPRQAGTPSKKPIS.

S-adenosyl-L-methionine is bound by residues glycine 79, phenylalanine 84, 130 to 131, and arginine 149; that span reads AE. Residues 218 to 239 are disordered; sequence KKTKTPKKYPRQAGTPSKKPIS.

This sequence belongs to the methyltransferase superfamily. RNA methyltransferase RsmG family.

The protein resides in the cytoplasm. Functionally, specifically methylates the N7 position of a guanine in 16S rRNA. This is Ribosomal RNA small subunit methyltransferase G from Leuconostoc mesenteroides subsp. mesenteroides (strain ATCC 8293 / DSM 20343 / BCRC 11652 / CCM 1803 / JCM 6124 / NCDO 523 / NBRC 100496 / NCIMB 8023 / NCTC 12954 / NRRL B-1118 / 37Y).